The following is a 118-amino-acid chain: Large ribosomal subunit protein bL20c (118 aa).

This sequence belongs to the bacterial ribosomal protein bL20 family.

Its subcellular location is the plastid. In terms of biological role, binds directly to 23S ribosomal RNA and is necessary for the in vitro assembly process of the 50S ribosomal subunit. It is not involved in the protein synthesizing functions of that subunit. This Cuscuta reflexa (Southern Asian dodder) protein is Large ribosomal subunit protein bL20c (rpl20).